The primary structure comprises 1177 residues: Transcription-repair-coupling factor (1177 aa).

In terms of domain architecture, Helicase ATP-binding spans 638–799; sequence DMERERPMDR…MLGVRDLSVI (162 aa). ATP is bound at residue 651–658; the sequence is GDVGYGKT. A DEEQ box motif is present at residues 752 to 755; it reads DEEQ. The 155-residue stretch at 820–974 folds into the Helicase C-terminal domain; it reads LVREAIEREL…GFKIAMRDLT (155 aa).

The protein in the N-terminal section; belongs to the UvrB family. It in the C-terminal section; belongs to the helicase family. RecG subfamily.

It localises to the cytoplasm. In terms of biological role, couples transcription and DNA repair by recognizing RNA polymerase (RNAP) stalled at DNA lesions. Mediates ATP-dependent release of RNAP and its truncated transcript from the DNA, and recruitment of nucleotide excision repair machinery to the damaged site. Probably required to repair non-bulky DNA lesions. This is Transcription-repair-coupling factor from Bacillus subtilis (strain 168).